We begin with the raw amino-acid sequence, 155 residues long: Small ribosomal subunit protein uS7c (155 aa).

The protein belongs to the universal ribosomal protein uS7 family. In terms of assembly, part of the 30S ribosomal subunit.

Its subcellular location is the plastid. It localises to the chloroplast. Functionally, one of the primary rRNA binding proteins, it binds directly to 16S rRNA where it nucleates assembly of the head domain of the 30S subunit. The sequence is that of Small ribosomal subunit protein uS7c (rps7) from Marchantia polymorpha (Common liverwort).